A 232-amino-acid polypeptide reads, in one-letter code: Putative homeobox protein NANOG2 (232 aa).

Residues 1–39 (MDLPIQDSHDSSTSPKGKQPTTAEKSATKKEDKVPVKKQ) are disordered. The segment covering 11-25 (SSTSPKGKQPTTAEK) has biased composition (polar residues). The segment covering 26–35 (SATKKEDKVP) has biased composition (basic and acidic residues). 8 tandem repeats follow at residues 123–127 (WSNQT), 128–132 (WNNST), 133–137 (WSNQT), 143–147 (WSNHS), 148–152 (WNTQT), 153–157 (WCTQS), 158–162 (WNNQA), and 163–167 (WNSPF). Positions 123 to 167 (WSNQTWNNSTWSNQTQNIQSWSNHSWNTQTWCTQSWNNQAWNSPF) are 8 X repeats starting with a Trp in each unit. Residues 123 to 167 (WSNQTWNNSTWSNQTQNIQSWSNHSWNTQTWCTQSWNNQAWNSPF) are sufficient for transactivation activity. A sufficient for strong transactivation activity region spans residues 168-232 (YNCGEESLQS…YSTNMXXEDV (65 aa)).

Belongs to the Nanog homeobox family.

Its subcellular location is the nucleus. Its function is as follows. Probable transcriptional regulator. The polypeptide is Putative homeobox protein NANOG2 (NANOGP1) (Pan paniscus (Pygmy chimpanzee)).